The primary structure comprises 383 residues: D-alanine--D-alanine ligase (383 aa).

The 210-residue stretch at lysine 164–threonine 373 folds into the ATP-grasp domain. Residue valine 196–glutamate 251 coordinates ATP. Positions 327, 340, and 342 each coordinate Mg(2+).

This sequence belongs to the D-alanine--D-alanine ligase family. Mg(2+) is required as a cofactor. Requires Mn(2+) as cofactor.

It is found in the cytoplasm. The enzyme catalyses 2 D-alanine + ATP = D-alanyl-D-alanine + ADP + phosphate + H(+). Its pathway is cell wall biogenesis; peptidoglycan biosynthesis. Its function is as follows. Cell wall formation. The polypeptide is D-alanine--D-alanine ligase (Kocuria rhizophila (strain ATCC 9341 / DSM 348 / NBRC 103217 / DC2201)).